A 642-amino-acid chain; its full sequence is Chaperone protein DnaK (642 aa).

At Thr199 the chain carries Phosphothreonine; by autocatalysis. A compositionally biased stretch (basic and acidic residues) spans 570–585 (EELEQASKDGDKEAID). The tract at residues 570–642 (EELEQASKDG…FEEVKDDDKK (73 aa)) is disordered. Residues 600-620 (EAAQQQQAQQGAEGAAGGEQQ) show a composition bias toward low complexity. The segment covering 627–642 (DVVDAEFEEVKDDDKK) has biased composition (acidic residues).

Belongs to the heat shock protein 70 family.

Functionally, acts as a chaperone. The chain is Chaperone protein DnaK from Idiomarina loihiensis (strain ATCC BAA-735 / DSM 15497 / L2-TR).